Consider the following 747-residue polypeptide: AMP deaminase 1 (747 aa).

Position 81 is a phosphothreonine (Thr81). At Ser85 the chain carries Phosphoserine. Tyr216 is subject to Phosphotyrosine. Zn(2+)-binding residues include His303 and His305. Substrate contacts are provided by residues His305 and 374-379 (KFNDKY). Ser441 carries the post-translational modification Phosphoserine. His572 is a binding site for Zn(2+). A substrate-binding site is contributed by Glu575. The active-site Proton acceptor is His594. Asp649 lines the Zn(2+) pocket. 650–653 (DPMQ) is a binding site for substrate.

This sequence belongs to the metallo-dependent hydrolases superfamily. Adenosine and AMP deaminases family. In terms of assembly, homotetramer. Zn(2+) serves as cofactor.

The catalysed reaction is AMP + H2O + H(+) = IMP + NH4(+). The protein operates within purine metabolism; IMP biosynthesis via salvage pathway; IMP from AMP: step 1/1. AMP deaminase plays a critical role in energy metabolism. In Homo sapiens (Human), this protein is AMP deaminase 1.